Consider the following 93-residue polypeptide: Early E3A 10.5 kDa glycoprotein (93 aa).

Asparagine 3 is a glycosylation site (N-linked (GlcNAc...) asparagine; by host). The helical transmembrane segment at 34–55 (MWWFSIALMFVCLIIMWLICCL) threads the bilayer.

Belongs to the adenoviridae E3A-1 family. In terms of processing, N-glycosylated and probably also O-glycosylated.

The protein localises to the host nucleus membrane. This is Early E3A 10.5 kDa glycoprotein from Homo sapiens (Human).